The following is a 282-amino-acid chain: Virginiamycin B lyase (282 aa).

Histidine 217 is a substrate binding site. Mg(2+) is bound at residue glutamate 256. Catalysis depends on histidine 258, which acts as the Proton acceptor. Position 273 (glutamate 273) interacts with Mg(2+).

The protein belongs to the Vgb family. Monomer. The cofactor is Mg(2+).

In terms of biological role, inactivates the type B streptogramin antibiotics by linearizing the lactone ring at the ester linkage, generating a free phenylglycine carboxylate and converting the threonyl moiety into 2-amino-butenoic acid. The protein is Virginiamycin B lyase of Mycolicibacterium smegmatis (strain ATCC 700084 / mc(2)155) (Mycobacterium smegmatis).